A 1027-amino-acid chain; its full sequence is LLGL scribble cell polarity complex component 2 (1027 aa).

10 WD repeats span residues 36-69, 76-117, 132-169, 193-227, 233-268, 282-324, 332-366, 388-464, 508-583, and 592-653; these read SALG…FMGL, VLQI…EESF, VTEI…DRTI, ALQE…LSHF, LENA…NPEP, AITK…GQQT, VIDF…VIDL, TCSH…YKLS, QKIF…FVLV, and TSLA…LRQS. Residue Ser-653 is modified to Phosphoserine. Positions 654–669 are enriched in basic residues; that stretch reads FRRMRRSRVSSHKRRP. A disordered region spans residues 654–678; that stretch reads FRRMRRSRVSSHKRRPGGPTGEAQA. WD repeat units lie at residues 715–771, 780–832, 837–890, and 904–927; these read VRTL…KEIQ, GILV…VSAK, LTAL…VRYS, and VFTK…SLST. The segment at 940–981 is disordered; sequence TKAKKHNRPSNGNGTGLKMTSSGHVRNSKSQSDGDEKKPGPV. Residues 957–970 are compositionally biased toward polar residues; sequence KMTSSGHVRNSKSQ. A phosphoserine mark is found at Ser-971 and Ser-1022.

The protein belongs to the WD repeat L(2)GL family. Interacts with GPSM2/LGN, PRKCI/aPKC and PARD6B/Par-6. The complex is enhanced during mitosis. Interacts with DCAF1. Post-translationally, phosphorylated at Ser-653 by PRKCI. Phosphorylation is enhanced during cell polarization induced by calcium. Phosphorylation may occur during the cell-cell contact-induced cell polarization and may contribute to the segregation of LLGL2 from the PRKCI/aPKC and PARD6B/Par-6 complex.

It localises to the cytoplasm. Part of a complex with GPSM2/LGN, PRKCI/aPKC and PARD6B/Par-6, which may ensure the correct organization and orientation of bipolar spindles for normal cell division. This complex plays roles in the initial phase of the establishment of epithelial cell polarity. In Mus musculus (Mouse), this protein is LLGL scribble cell polarity complex component 2 (Llgl2).